The chain runs to 670 residues: NAD-dependent histone deacetylase SIR2 (670 aa).

2 disordered regions span residues 1-157 (MTEY…EHPI) and 235-263 (DNDD…PSPS). Residues 45-68 (NEDVDVDADADVDADADADADAEE) show a composition bias toward acidic residues. The span at 69-81 (DAQKDILEETKAD) shows a compositional bias: basic and acidic residues. Positions 82–92 (ELDEVVDEYEE) are enriched in acidic residues. Over residues 96 to 119 (SSNFNGTASDHVGITSSNTGSTAL) the composition is skewed to polar residues. Over residues 120–142 (AASSADTNSGSGNGTGTMATNGT) the composition is skewed to low complexity. Residues 239-261 (SLPQKNSSETKNVSDTYTATYPS) are compositionally biased toward polar residues. One can recognise a Deacetylase sirtuin-type domain in the interval 293-583 (RLTNFHTIDD…ALVAQKCGWD (291 aa)). NAD(+) contacts are provided by residues 318–337 (GAGI…EGFY) and 400–403 (QNID). Catalysis depends on His-420, which acts as the Proton acceptor. Zn(2+)-binding residues include Cys-428, Cys-431, Cys-452, and Cys-455. NAD(+)-binding positions include 527–529 (GTS), 552–554 (NKD), and Cys-569. The interval 617–670 (AELEAEEEKHLPLQQSTAALTPPVSLSADSPGRSSSSSPQPPTQTDIANNQTST) is disordered. Positions 641–654 (SLSADSPGRSSSSS) are enriched in low complexity. Polar residues predominate over residues 659-670 (TQTDIANNQTST).

The protein belongs to the sirtuin family. Class I subfamily. The cofactor is Zn(2+).

It localises to the nucleus. It catalyses the reaction N(6)-acetyl-L-lysyl-[protein] + NAD(+) + H2O = 2''-O-acetyl-ADP-D-ribose + nicotinamide + L-lysyl-[protein]. Its function is as follows. NAD-dependent deacetylase, which asts as a key regulator of gene expression believed to help form modified chromatin structures on the genes it regulates. It is involved in telomeric silencing and in hm mating type loci silencing. This chain is NAD-dependent histone deacetylase SIR2 (SIR2), found in Kluyveromyces lactis (strain ATCC 8585 / CBS 2359 / DSM 70799 / NBRC 1267 / NRRL Y-1140 / WM37) (Yeast).